Here is a 478-residue protein sequence, read N- to C-terminus: 3-ketoacyl-CoA synthase 3 (478 aa).

The signal sequence occupies residues 1-25 (MDLLVMLLSLLVSYLIFKIWKRIDS). The FAE domain occupies 26–313 (KRDQNCYILD…FMLCLLLKKL (288 aa)). Active-site residues include Cys168, His247, His345, His349, His378, and Asn382.

This sequence belongs to the thiolase-like superfamily. Chalcone/stilbene synthases family. In terms of tissue distribution, expressed in siliques, leaves, stems and seedlings.

Its subcellular location is the endoplasmic reticulum. It carries out the reaction a very-long-chain acyl-CoA + malonyl-CoA + H(+) = a very-long-chain 3-oxoacyl-CoA + CO2 + CoA. Its pathway is lipid metabolism; fatty acid biosynthesis. This chain is 3-ketoacyl-CoA synthase 3, found in Arabidopsis thaliana (Mouse-ear cress).